Consider the following 499-residue polypeptide: Aspartyl/glutamyl-tRNA(Asn/Gln) amidotransferase subunit B (499 aa).

This sequence belongs to the GatB/GatE family. GatB subfamily. Heterotrimer of A, B and C subunits.

The catalysed reaction is L-glutamyl-tRNA(Gln) + L-glutamine + ATP + H2O = L-glutaminyl-tRNA(Gln) + L-glutamate + ADP + phosphate + H(+). The enzyme catalyses L-aspartyl-tRNA(Asn) + L-glutamine + ATP + H2O = L-asparaginyl-tRNA(Asn) + L-glutamate + ADP + phosphate + 2 H(+). Its function is as follows. Allows the formation of correctly charged Asn-tRNA(Asn) or Gln-tRNA(Gln) through the transamidation of misacylated Asp-tRNA(Asn) or Glu-tRNA(Gln) in organisms which lack either or both of asparaginyl-tRNA or glutaminyl-tRNA synthetases. The reaction takes place in the presence of glutamine and ATP through an activated phospho-Asp-tRNA(Asn) or phospho-Glu-tRNA(Gln). In Leifsonia xyli subsp. xyli (strain CTCB07), this protein is Aspartyl/glutamyl-tRNA(Asn/Gln) amidotransferase subunit B.